A 443-amino-acid polypeptide reads, in one-letter code: Eukaryotic translation initiation factor 3 subunit M (443 aa).

Positions 205 to 375 (GLYQSTGNLA…SLIRIHSISS (171 aa)) constitute a PCI domain. Residues 413 to 443 (ETVAQQGLGQQRRGGKRREEKKEKEDKEEQE) form a disordered region. Over residues 429-443 (RREEKKEKEDKEEQE) the composition is skewed to basic and acidic residues.

It belongs to the eIF-3 subunit M family. In terms of assembly, component of the eukaryotic translation initiation factor 3 (eIF-3) complex.

The protein localises to the cytoplasm. Its function is as follows. Component of the eukaryotic translation initiation factor 3 (eIF-3) complex, which is involved in protein synthesis of a specialized repertoire of mRNAs and, together with other initiation factors, stimulates binding of mRNA and methionyl-tRNAi to the 40S ribosome. The eIF-3 complex specifically targets and initiates translation of a subset of mRNAs involved in cell proliferation. This chain is Eukaryotic translation initiation factor 3 subunit M, found in Cryptococcus neoformans var. neoformans serotype D (strain B-3501A) (Filobasidiella neoformans).